Here is a 153-residue protein sequence, read N- to C-terminus: uncharacterized protein (153 aa).

Residues 1–22 form the signal peptide; the sequence is MKLLKKGTTVLFVMIMAVMLVA. Cysteine 23 carries N-palmitoyl cysteine lipidation. The S-diacylglycerol cysteine moiety is linked to residue cysteine 23. Residues 121 to 153 form a disordered region; sequence LPGMASTGDVSKGISMKESEKMLKSQGFKEVEK. The span at 135–153 shows a compositional bias: basic and acidic residues; that stretch reads SMKESEKMLKSQGFKEVEK.

To E.coli YehR.

It is found in the cell membrane. This is an uncharacterized protein from Listeria innocua serovar 6a (strain ATCC BAA-680 / CLIP 11262).